Consider the following 285-residue polypeptide: Probable endonuclease 4 (285 aa).

Zn(2+) contacts are provided by histidine 69, histidine 109, glutamate 145, aspartate 179, histidine 182, histidine 216, aspartate 229, histidine 231, and glutamate 261.

The protein belongs to the AP endonuclease 2 family. Zn(2+) serves as cofactor.

It carries out the reaction Endonucleolytic cleavage to 5'-phosphooligonucleotide end-products.. Functionally, endonuclease IV plays a role in DNA repair. It cleaves phosphodiester bonds at apurinic or apyrimidinic (AP) sites, generating a 3'-hydroxyl group and a 5'-terminal sugar phosphate. This chain is Probable endonuclease 4, found in Salmonella schwarzengrund (strain CVM19633).